A 329-amino-acid polypeptide reads, in one-letter code: Serpentine receptor class alpha-6 (329 aa).

7 consecutive transmembrane segments (helical) span residues 26–46 (VDLLAIILAFFASYFAIKIVI), 68–88 (LYQISYGIEAIGMLYRGFFML), 104–124 (YFKVLMIGTSGMIFGQTGLLI), 143–163 (IGVCISLIVLVCSTSSGFIIL), 187–207 (NLFSILSTVLTLFNLIVSIFI), 238–258 (ICFLALSQFLWMFMYSFGILI), and 273–293 (FWIAWCYTMPFIALMFPVLLI).

It belongs to the nematode receptor-like protein sra family.

The protein resides in the membrane. This is Serpentine receptor class alpha-6 (sra-6) from Caenorhabditis elegans.